The sequence spans 507 residues: Arabinose import ATP-binding protein AraG (507 aa).

ABC transporter domains are found at residues 8–243 (LSFH…MVGR) and 255–499 (PHGE…MLRI). 40 to 47 (GENGAGKS) is a binding site for ATP.

It belongs to the ABC transporter superfamily. Arabinose importer (TC 3.A.1.2.2) family. The complex is composed of two ATP-binding proteins (AraG), two transmembrane proteins (AraH) and a solute-binding protein (AraF).

It localises to the cell inner membrane. It catalyses the reaction L-arabinose(out) + ATP + H2O = L-arabinose(in) + ADP + phosphate + H(+). In terms of biological role, part of the ABC transporter complex AraFGH involved in arabinose import. Responsible for energy coupling to the transport system. The chain is Arabinose import ATP-binding protein AraG from Pectobacterium atrosepticum (strain SCRI 1043 / ATCC BAA-672) (Erwinia carotovora subsp. atroseptica).